The sequence spans 211 residues: Protein-L-isoaspartate O-methyltransferase (211 aa).

S62 is an active-site residue.

Belongs to the methyltransferase superfamily. L-isoaspartyl/D-aspartyl protein methyltransferase family.

It is found in the cytoplasm. The enzyme catalyses [protein]-L-isoaspartate + S-adenosyl-L-methionine = [protein]-L-isoaspartate alpha-methyl ester + S-adenosyl-L-homocysteine. Its function is as follows. Catalyzes the methyl esterification of L-isoaspartyl residues in peptides and proteins that result from spontaneous decomposition of normal L-aspartyl and L-asparaginyl residues. It plays a role in the repair and/or degradation of damaged proteins. The sequence is that of Protein-L-isoaspartate O-methyltransferase from Shewanella pealeana (strain ATCC 700345 / ANG-SQ1).